A 146-amino-acid chain; its full sequence is Angiogenin (146 aa).

Positions 1–24 are cleaved as a signal peptide; it reads MVMGPHLLLLVFILGLGLTPPTLA. At Gln25 the chain carries Pyrrolidone carboxylic acid. His37 (proton acceptor) is an active-site residue. 3 disulfides stabilise this stretch: Cys50–Cys105, Cys63–Cys116, and Cys81–Cys131. A Nucleolar localization signal motif is present at residues 55-59; that stretch reads RLRNM. Positions 105 and 127 each coordinate tRNA. His138 functions as the Proton donor in the catalytic mechanism.

This sequence belongs to the pancreatic ribonuclease family. In terms of assembly, homodimer. Interacts with RNH1; inhibiting ANG ribonuclease activity. Interacts with PCNA.

The protein resides in the secreted. The protein localises to the nucleus. Its subcellular location is the nucleolus. It localises to the cytoplasm. It is found in the stress granule. With respect to regulation, has weak tRNA ribonuclease activity by itself due to partial autoinhibition by its C-terminus, which folds into a short alpha-helix that partially occludes the substrate-binding site. In absence of stress, the ribonuclease activity is inhibited by RNH1 in the cytoplasm. In response to stress, dissociates from RNH1 in the cytoplasm and associates with cytoplasmic ribosomes with vacant A-sites: ribosomes directly activate the tRNA ribonuclease activity of ANG by refolding the C-terminal alpha-helix. In response to stress, the angiogenic activity of ANG is inhibited by RNH1 in the nucleus. Functionally, secreted ribonuclease that can either promote or restrict cell proliferation of target cells, depending on the context. Endocytosed in target cells via its receptor PLXNB2 and translocates to the cytoplasm or nucleus. Under stress conditions, localizes to the cytoplasm and promotes the assembly of stress granules (SGs): specifically cleaves a subset of tRNAs within anticodon loops to produce tRNA-derived stress-induced fragments (tiRNAs), resulting in translation repression and inhibition of cell proliferation. tiRNas also prevent formation of apoptosome, thereby promoting cell survival. Preferentially cleaves RNAs between a pyrimidine and an adenosine residue, suggesting that it cleaves the anticodon loop of tRNA(Ala) (32-UUAGCAU-38) after positions 33 and 36. Cleaves a subset of tRNAs, including tRNA(Ala), tRNA(Glu), tRNA(Gly), tRNA(Lys), tRNA(Val), tRNA(His), tRNA(Asp) and tRNA(Sec). Under growth conditions and in differentiated cells, translocates to the nucleus and stimulates ribosomal RNA (rRNA) transcription, including that containing the initiation site sequences of 45S rRNA, thereby promoting cell growth and proliferation. Angiogenin induces vascularization of normal and malignant tissues via its ability to promote rRNA transcription. Involved in hematopoietic stem and progenitor cell (HSPC) growth and survival by promoting rRNA transcription in growth conditions and inhibiting translation in response to stress, respectively. Mediates the crosstalk between myeloid and intestinal epithelial cells to protect the intestinal epithelial barrier integrity: secreted by myeloid cells and promotes intestinal epithelial cells proliferation and survival. Also mediates osteoclast-endothelial cell crosstalk in growing bone: produced by osteoclasts and protects the neighboring vascular cells against senescence by promoting rRNA transcription. This Saimiri sciureus (Common squirrel monkey) protein is Angiogenin (ANG).